The following is a 2763-amino-acid chain: Large tegument protein deneddylase (2763 aa).

The interval 1-247 (MDIIPPIAVT…CDTYFTDEQY (247 aa)) is deubiquitination activity. The Peptidase C76 domain maps to 12-237 (AGVGSRNQFD…SSAVTLIYGS (226 aa)). Residues Cys32, Asp168, and His170 contribute to the active site. Residues 495–523 (LELFINLTILRLTGFVVENGTRTHHGATS) form an interaction with inner tegument protein region. 8 consecutive repeat copies span residues 2455-2457 (PVQ), 2458-2460 (PVQ), 2461-2463 (PAQ), 2464-2466 (PVQ), 2467-2469 (PAQ), 2470-2472 (PAQ), 2473-2475 (PVQ), and 2476-2478 (PAQ). Positions 2455-2478 (PVQPVQPAQPVQPAQPAQPVQPAQ) are 8 X 3 AA repeats of P-A/V-Q. Residues 2630–2651 (NYKTRQPSPNFPRDVHTWGVSS) are disordered.

Belongs to the herpesviridae large tegument protein family. In terms of assembly, interacts with host CUL1 and CUL4A; these interactions inhibit the E3 ligase activity of cullins. Interacts with inner tegument protein. Interacts with capsid vertex specific component CVC2. Interacts with the major capsid protein/MCP.

The protein resides in the virion tegument. It is found in the host cytoplasm. Its subcellular location is the host nucleus. The catalysed reaction is Thiol-dependent hydrolysis of ester, thioester, amide, peptide and isopeptide bonds formed by the C-terminal Gly of ubiquitin (a 76-residue protein attached to proteins as an intracellular targeting signal).. In terms of biological role, large tegument protein that plays multiple roles in the viral cycle. During viral entry, remains associated with the capsid while most of the tegument is detached and participates in the capsid transport toward the host nucleus. Plays a role in the routing of the capsid at the nuclear pore complex and subsequent uncoating. Within the host nucleus, acts as a deneddylase and promotes the degradation of nuclear CRLs (cullin-RING ubiquitin ligases) and thereby stabilizes nuclear CRL substrates, while cytoplasmic CRLs remain unaffected. These modifications prevent host cell cycle S-phase progression and create a favorable environment allowing efficient viral genome replication. Participates later in the secondary envelopment of capsids. Indeed, plays a linker role for the association of the outer viral tegument to the capsids together with the inner tegument protein. The sequence is that of Large tegument protein deneddylase from Varicella-zoster virus (strain Oka vaccine) (HHV-3).